Consider the following 356-residue polypeptide: S-adenosylmethionine:tRNA ribosyltransferase-isomerase (356 aa).

The protein belongs to the QueA family. As to quaternary structure, monomer.

The protein localises to the cytoplasm. It carries out the reaction 7-aminomethyl-7-carbaguanosine(34) in tRNA + S-adenosyl-L-methionine = epoxyqueuosine(34) in tRNA + adenine + L-methionine + 2 H(+). It functions in the pathway tRNA modification; tRNA-queuosine biosynthesis. Functionally, transfers and isomerizes the ribose moiety from AdoMet to the 7-aminomethyl group of 7-deazaguanine (preQ1-tRNA) to give epoxyqueuosine (oQ-tRNA). This chain is S-adenosylmethionine:tRNA ribosyltransferase-isomerase, found in Yersinia pseudotuberculosis serotype O:3 (strain YPIII).